A 936-amino-acid chain; its full sequence is Isoleucine--tRNA ligase (936 aa).

The short motif at 58–68 (PYANGRAHLGT) is the 'HIGH' region element. Glu561 serves as a coordination point for L-isoleucyl-5'-AMP. The 'KMSKS' region motif lies at 602–606 (KMSKS). Lys605 provides a ligand contact to ATP. Cys899, Cys902, Cys919, and Cys922 together coordinate Zn(2+).

This sequence belongs to the class-I aminoacyl-tRNA synthetase family. IleS type 1 subfamily. As to quaternary structure, monomer. Zn(2+) serves as cofactor.

The protein resides in the cytoplasm. The catalysed reaction is tRNA(Ile) + L-isoleucine + ATP = L-isoleucyl-tRNA(Ile) + AMP + diphosphate. Functionally, catalyzes the attachment of isoleucine to tRNA(Ile). As IleRS can inadvertently accommodate and process structurally similar amino acids such as valine, to avoid such errors it has two additional distinct tRNA(Ile)-dependent editing activities. One activity is designated as 'pretransfer' editing and involves the hydrolysis of activated Val-AMP. The other activity is designated 'posttransfer' editing and involves deacylation of mischarged Val-tRNA(Ile). The polypeptide is Isoleucine--tRNA ligase (Coxiella burnetii (strain CbuK_Q154) (Coxiella burnetii (strain Q154))).